Here is a 746-residue protein sequence, read N- to C-terminus: NAD(P)H-quinone oxidoreductase subunit 5, chloroplastic (746 aa).

Helical transmembrane passes span 9–29, 40–60, 89–109, 121–140, 147–167, 185–205, 219–239, 258–278, 280–300, 327–347, 354–374, 396–416, 425–445, 552–572, 606–626, and 726–746; these read WIIP…LLLF, WAFP…DLSI, IDSL…LVLI, YLRF…GLVT, VYIF…FWFT, GDFG…SLEF, NEVN…GSVA, TPIS…FLVA, LLPL…IGII, LGYM…FHLI, ALLF…VGYS, MSFL…CFWS, WLYS…TAFY, LFSM…GISF, FFIN…IASF, and SYIF…YLFP.

This sequence belongs to the complex I subunit 5 family. As to quaternary structure, NDH is composed of at least 16 different subunits, 5 of which are encoded in the nucleus.

Its subcellular location is the plastid. The protein resides in the chloroplast thylakoid membrane. The catalysed reaction is a plastoquinone + NADH + (n+1) H(+)(in) = a plastoquinol + NAD(+) + n H(+)(out). The enzyme catalyses a plastoquinone + NADPH + (n+1) H(+)(in) = a plastoquinol + NADP(+) + n H(+)(out). In terms of biological role, NDH shuttles electrons from NAD(P)H:plastoquinone, via FMN and iron-sulfur (Fe-S) centers, to quinones in the photosynthetic chain and possibly in a chloroplast respiratory chain. The immediate electron acceptor for the enzyme in this species is believed to be plastoquinone. Couples the redox reaction to proton translocation, and thus conserves the redox energy in a proton gradient. The sequence is that of NAD(P)H-quinone oxidoreductase subunit 5, chloroplastic (ndhF) from Vicia faba (Broad bean).